A 424-amino-acid chain; its full sequence is MLDIKFLRTNFEEVKAKLQHRGEDLTDFGRFEELDTRRRELLVQTEELKSKRNEVSQQISVLKREKKDAEALILEMREVGEKVKDLDNELRTVEEDLERLMLSIPNIPHESAPVGETEDDNVVARTWGEVKEFNFEPKPHWDLATDLGILDFERAGKVTGSRFVFYKGAGARLERALISFMLDLHTDEHGYEEVLPPYMVNRASMTGTGQLPKFEEDAFRIESEDYFLIPTAEVPVTNMHRDEILNKEQLPIRYAAFSSCFRSEAGSAGRDTRGLIRQHQFNKVELVKFVKPEDSYEELEKLTNDAERVLQLLELPYRVMSMCTGDLGFTAAKKYDIEVWIPSYGTYREISSCSNFEAFQARRANIRFRREPNGKPEHVHTLNGSGLAIGRTVAAILENYQQEDGTIIIPEVLRPYMGGKTVIK.

231–233 (TAE) is a binding site for L-serine. 262–264 (RSE) is an ATP binding site. Glu-285 provides a ligand contact to L-serine. Position 349–352 (349–352 (EISS)) interacts with ATP. Ser-385 is an L-serine binding site.

This sequence belongs to the class-II aminoacyl-tRNA synthetase family. Type-1 seryl-tRNA synthetase subfamily. As to quaternary structure, homodimer. The tRNA molecule binds across the dimer.

It localises to the cytoplasm. The enzyme catalyses tRNA(Ser) + L-serine + ATP = L-seryl-tRNA(Ser) + AMP + diphosphate + H(+). It carries out the reaction tRNA(Sec) + L-serine + ATP = L-seryl-tRNA(Sec) + AMP + diphosphate + H(+). It participates in aminoacyl-tRNA biosynthesis; selenocysteinyl-tRNA(Sec) biosynthesis; L-seryl-tRNA(Sec) from L-serine and tRNA(Sec): step 1/1. Functionally, catalyzes the attachment of serine to tRNA(Ser). Is also able to aminoacylate tRNA(Sec) with serine, to form the misacylated tRNA L-seryl-tRNA(Sec), which will be further converted into selenocysteinyl-tRNA(Sec). The sequence is that of Serine--tRNA ligase from Bacillus cereus (strain ZK / E33L).